Reading from the N-terminus, the 305-residue chain is MFFTPPQLQKLEQDWNGLAVRDWMIANVDVVLYISFLYLGFVFIGPKLFAKLVGTNPAAAAAGARSADGTGSPIVRRSMVVWNLALSIFSIFGTSTVTPVLLRNLANKGFYGATCDFKETEFYTTNVGFWMGIFALSKIPELVDTIFLVLQGKQELPFLHWYHHVTVLLFSWHTYCVGSSAYIWVAAMNYSVHSVMYLYFALAALGYKRVVRPLAPYITIIQILQMVVGCYVTIFALQELHGEGGRGCGVSPANMRIQLVMYASYLYLFSKMFVASYIRPPKRPTVGGPSSTAGVSNGSVEKKVK.

A run of 7 helical transmembrane segments spans residues methionine 24 to isoleucine 44, valine 80 to valine 100, phenylalanine 129 to valine 149, phenylalanine 158 to glycine 178, isoleucine 183 to alanine 203, tyrosine 217 to leucine 237, and isoleucine 257 to tyrosine 277. The short motif at histidine 160–histidine 164 is the HxxHH motif element. Catalysis depends on histidine 163, which acts as the Nucleophile. Positions proline 284 to lysine 305 are disordered. The segment covering glycine 288–serine 299 has biased composition (polar residues). Asparagine 297 carries N-linked (GlcNAc...) asparagine glycosylation.

The protein belongs to the ELO family.

It is found in the endoplasmic reticulum membrane. It catalyses the reaction an acyl-CoA + malonyl-CoA + H(+) = a 3-oxoacyl-CoA + CO2 + CoA. Its pathway is lipid metabolism; fatty acid biosynthesis. Its function is as follows. Involved in the synthesis of fatty acids. Elongates C4 fatty acids to C10. This is Fatty acid elongase 1 from Trypanosoma brucei brucei (strain 927/4 GUTat10.1).